The following is a 4059-amino-acid chain: Fibrocystin (4059 aa).

The N-terminal stretch at 1–18 is a signal peptide; the sequence is MMLAWLVSLLSMEVLLLA. Over 19-3851 the chain is Extracellular; that stretch reads KPYSSFQFEP…LPVASKERST (3833 aa). The IPT/TIG 1; atypical domain maps to 25 to 109; it reads QFEPAEGSLA…AGPYSLEMRS (85 aa). Asparagine 55 and asparagine 224 each carry an N-linked (GlcNAc...) asparagine glycan. IPT/TIG domains are found at residues 135 to 230 and 257 to 333; these read PVLY…FSVF and PEIL…FEVG. The 161-residue stretch at 323–483 folds into the PA14 domain; the sequence is AGNRGLRFEV…TWLNPDVVNT (161 aa). N-linked (GlcNAc...) asparagine glycosylation is found at asparagine 355, asparagine 385, asparagine 518, asparagine 527, asparagine 620, asparagine 639, asparagine 709, asparagine 867, asparagine 965, asparagine 975, asparagine 1082, asparagine 1114, asparagine 1133, asparagine 1239, asparagine 1273, asparagine 1308, asparagine 1319, asparagine 1344, asparagine 1373, asparagine 1456, asparagine 1471, asparagine 1528, asparagine 1613, asparagine 1627, asparagine 1694, asparagine 1760, asparagine 1775, asparagine 1875, asparagine 1879, asparagine 1915, asparagine 1955, asparagine 2030, and asparagine 2139. IPT/TIG domains follow at residues 945 to 997 and 1017 to 1100; these read LVHF…FMLV and PRLD…AFTY. The 85-residue stretch at 1106-1190 folds into the IPT/TIG 6; atypical domain; that stretch reads PVIVSLSRNR…IRSQGVDLYI (85 aa). In terms of domain architecture, IPT/TIG 7 spans 1198-1266; it reads SVEPCSGSLL…RADVLTVLAS (69 aa). The 82-residue stretch at 1297 to 1378 folds into the IPT/TIG 8; atypical domain; sequence PVVTAMWGEF…MGFANMSVVP (82 aa). The region spanning 1385–1466 is the IPT/TIG 9 domain; it reads PQIIAIFPTH…ITVLVNGLTS (82 aa). IPT/TIG domains are found at residues 1482–1566 and 1569–1637; these read PIVD…RNFF and PQVL…IDVN. Residues 1654–1738 form the IPT/TIG 12; atypical domain; that stretch reads PELLSVSRSQ…VLRATVTSVT (85 aa). The G8 1 domain maps to 1928–2049; it reads HSWFPQRVPH…PEVTVTYLQA (122 aa). PbH1 repeat units lie at residues 2244–2266 and 2287–2321; these read TWGL…LLGS and EQGS…YTFS. The N-linked (GlcNAc...) asparagine glycan is linked to asparagine 2380. PbH1 repeat units lie at residues 2404–2426 and 2459–2481; these read SNNL…DILE and RWEL…AIRT. N-linked (GlcNAc...) asparagine glycans are attached at residues asparagine 2466, asparagine 2503, asparagine 2529, asparagine 2547, asparagine 2581, asparagine 2589, asparagine 2627, asparagine 2747, and asparagine 2762. A G8 2 domain is found at 2741–2867; it reads KGWGGYNHTI…PKKSWVHLGA (127 aa). PbH1 repeat units lie at residues 3004–3026 and 3027–3049; these read SAGS…HASS and SHGV…DVEG. Asparagine 3051 carries N-linked (GlcNAc...) asparagine glycosylation. One copy of the PbH1 7 repeat lies at 3080-3102; sequence AEDIILHGNVVAGSERLGFHVGG. N-linked (GlcNAc...) asparagine glycosylation is found at asparagine 3133 and asparagine 3162. A PbH1 8 repeat occupies 3188-3212; sequence TVQITLRNSVIVATSSSFDCIHDRK. N-linked (GlcNAc...) asparagine glycosylation is found at asparagine 3218, asparagine 3719, and asparagine 3831. A helical membrane pass occupies residues 3852–3872; it reads IILALSLCSVASWVALSCLVC. Positions 3869-3886 are ciliary targeting sequence (CST); the sequence is CLVCCWFKKSKTRKIKPE. Residues 3873–4059 are Cytoplasmic-facing; that stretch reads CWFKKSKTRK…LHTAPPETIQ (187 aa). Basic and acidic residues predominate over residues 3885–3898; the sequence is PEDISESQAKEQKK. A disordered region spans residues 3885 to 3915; sequence PEDISESQAKEQKKNTHNSSKPRGLQAKTAK. The interval 3946–3970 is nuclear localization signal (NLS); the sequence is KRKVSRLAVTEERTTTPAPKIPRIT. The segment at 4015 to 4038 is disordered; sequence QERKQGQEPSQLDKGSDCTGLSQE.

As to quaternary structure, interacts with CAMLG. Interacts with PKD2. Interacts (via CST) with ARF4; this interaction allows an efficient PKHD1 trafficking to the cilium. Interacts (via CST) with RAB8A; this interaction controls trafficking through the endomembrane systeme and to the cilium. Interacts (via CST) with TULP3; this interaction allows PKHD1 trafficking to the cilium. Palmitoylated. Palmitoylation facilitates the trafficking to the cilia and membrane targeting. In terms of processing, N-glycosylated. Post-translationally, several proteolytic cleavages occur within the extracellular domain, whereas at least one cleavage occurs within the cytoplasmic domain. Cleaved by a probable proprotein convertase which produces an extracellular domain (polyductin extracellular domain, (PECD)) and a C-terminal fragment (polyductin transmembrane fragment (PTM)) which are tethered together by disulfide bonds. This extracellular domain (PECD) is then shed from the primary cilium by activation of a member of the ADAM metalloproteinase disintegrins family, resulting in concomitant release of an intra-cellular C-terminal fragment (ICD) via a gamma-secretase-dependent process. The proteolytic cleavage of the C-terminal intracellular fragment (ICD) is controlled by cytosolic calcium concentration and activation of PKC. Expressed in bile ducts and distal nephron segments but is absent from the proximal tubule. Expressed in pancreas and kidney but also in the liver. Expressed primarily in the distal tubule and thick ascending limb of the loop of Henle, and at low-level in the proximal tubule before renal development is complete at P0.

It is found in the cell membrane. It localises to the cytoplasm. Its subcellular location is the apical cell membrane. The protein localises to the cytoskeleton. The protein resides in the cilium basal body. It is found in the cell projection. It localises to the cilium. Its subcellular location is the spindle. The protein localises to the chromosome. The protein resides in the centromere. It is found in the nucleus. It localises to the secreted. Its subcellular location is the extracellular exosome. The protein localises to the endoplasmic reticulum. The protein resides in the golgi apparatus. Functionally, promotes ciliogenesis in renal epithelial cells and therefore participates in the tubules formation and/or ensures the maintenance of the architecture of the lumen of the kidney. Has an impact on cellular symmetry by ensuring correct bipolar cell division through the regulation of centrosome duplication and mitotic spindle assembly and by maintaining oriented cell division (OCD) during tubular elongation through planar cell polarity (PCP) pathway. During epithelial cell morphogenesis, it also regulates cell-cell and cell-matrix adhesion and participates in cell motility. Promotes cell-cell contact through the positive regulation of PTK2 kinase activity leading to either positive regulation of epithelial cell proliferation through the HRAS/RAF1 pathways, or negative regulation of apoptosis through the PDK1/AKT1 pathway. May act in collecting-duct and biliary differentiation. May participate in the regulation of the cholangiocytes proliferation and the CCN2 production in an CXCL8-dependent manner. The protein is Fibrocystin of Mus musculus (Mouse).